The following is a 505-amino-acid chain: AMP phosphorylase (505 aa).

AMP is bound by residues glycine 170, 196-201, and threonine 205; that span reads SRAITS. The Proton donor role is filled by aspartate 258. Residues serine 266 and lysine 290 each coordinate AMP.

Belongs to the thymidine/pyrimidine-nucleoside phosphorylase family. Type 2 subfamily.

It carries out the reaction AMP + phosphate = alpha-D-ribose 1,5-bisphosphate + adenine. The enzyme catalyses CMP + phosphate = cytosine + alpha-D-ribose 1,5-bisphosphate. It catalyses the reaction UMP + phosphate = alpha-D-ribose 1,5-bisphosphate + uracil. Catalyzes the conversion of AMP and phosphate to adenine and ribose 1,5-bisphosphate (R15P). Exhibits phosphorylase activity toward CMP and UMP in addition to AMP. Functions in an archaeal AMP degradation pathway, together with R15P isomerase and RubisCO. This is AMP phosphorylase from Methanococcus maripaludis (strain C7 / ATCC BAA-1331).